A 358-amino-acid chain; its full sequence is MRQILFAAAIALTVSILLTPALIKFFAKQGFGQEIRVDGPASHQSKRGTPTMGGVAILIGMWAGYLGSHLIGIAYDAEGPSASALLVLGLATALGAVGFIDDFIKIRKGRNLGLTAAGKYLGQLTAAIVFGVLALQFRGENGLTPASRHLSYVRDITTVSMGVIVFLAFVSLVVVAWSNAVNLTDGLDGLAAGSMSLVLGGYVIITFWQYYHACATKPETGCYNVRDPLDLALVCAAGTAACIGFLWWNAAPAKIFMGDTGSLALGGLLAGLSITTRTELLMVVIGALFVAEAASVVLQVAVFRTTRNRLFKMAPFHHHFELSKWAETTVIIRFWLLAAMASAFGLGLFYSEYLSAVG.

10 helical membrane passes run glutamine 3–isoleucine 23, glycine 54–alanine 74, alanine 84–isoleucine 104, leucine 114–alanine 134, isoleucine 156–alanine 176, leucine 187–phenylalanine 207, leucine 231–alanine 251, isoleucine 255–threonine 275, valine 283–phenylalanine 303, and valine 330–tyrosine 350.

It belongs to the glycosyltransferase 4 family. MraY subfamily. It depends on Mg(2+) as a cofactor.

The protein localises to the cell membrane. The enzyme catalyses UDP-N-acetyl-alpha-D-muramoyl-L-alanyl-gamma-D-glutamyl-meso-2,6-diaminopimeloyl-D-alanyl-D-alanine + di-trans,octa-cis-undecaprenyl phosphate = di-trans,octa-cis-undecaprenyl diphospho-N-acetyl-alpha-D-muramoyl-L-alanyl-D-glutamyl-meso-2,6-diaminopimeloyl-D-alanyl-D-alanine + UMP. It functions in the pathway cell wall biogenesis; peptidoglycan biosynthesis. Its function is as follows. Catalyzes the initial step of the lipid cycle reactions in the biosynthesis of the cell wall peptidoglycan: transfers peptidoglycan precursor phospho-MurNAc-pentapeptide from UDP-MurNAc-pentapeptide onto the lipid carrier undecaprenyl phosphate, yielding undecaprenyl-pyrophosphoryl-MurNAc-pentapeptide, known as lipid I. The chain is Phospho-N-acetylmuramoyl-pentapeptide-transferase from Nocardia farcinica (strain IFM 10152).